A 284-amino-acid polypeptide reads, in one-letter code: CUE domain-containing protein 2 (284 aa).

Residues 141–184 (EELPGVDVLLEVFPTCSMEQAQWVLAKARGDLEEAVHMLVEGKE) form the CUE domain. The tract at residues 183–204 (KEEGPPGWDGPSQDLPRRLRGP) is disordered.

It belongs to the CUEDC2 family. In terms of assembly, interacts with PGR and ESR1.

It is found in the cytoplasm. The protein localises to the nucleus. Controls PGR and ESR1 protein levels through their targeting for ubiquitination and subsequent proteasomal degradation. The protein is CUE domain-containing protein 2 (Cuedc2) of Mus musculus (Mouse).